A 133-amino-acid chain; its full sequence is Interferon alpha-inducible protein 27-like protein 2 (133 aa).

Transmembrane regions (helical) follow at residues 8–28 (AAIGGALAVAAVPAVLGAVGF), 51–71 (GGGVAAGSLVATLQSVGAAGL), and 73–93 (TSSNILLGSIGSAFGALLGGA). The interval 93-133 (AKRASPSPPPGGPRPEGEQPGENVPQVEPPKSPLGPEKHEK) is disordered.

It belongs to the IFI6/IFI27 family.

The protein localises to the mitochondrion membrane. Functionally, plays a role in the apoptotic process and has a pro-apoptotic activity. In Bos taurus (Bovine), this protein is Interferon alpha-inducible protein 27-like protein 2.